Here is a 568-residue protein sequence, read N- to C-terminus: MAELMAMGNDVVHVAVKSDVRESRSTLLWALRNLGAKKVCILHVYQPKTASPAARKLEELEAIMYETLHDYFDFCQQEGVNEDDIYISCIEMNDVKQGILELIHESKIKKLVMGAASDHHYSEKMFDLKSRKAKYVYQHAPSSCEVMFMCDGHLIYTKEANLEDCMGETESEAGQSKPKLYSSASPKCSAELVSAIVAYIDTRRDRDMLEPNASEDQSESDRNDQLYRQLKQALMEVEESKREAYEECVRRFKAENTAVEAIRSAREYEAMYNEEAKLRKEGKEALAKQRKMVEKTKQERDDALIIILNGRKLYNEELRRRVEAEEMLGKEKEEHERTKKEIEEVRAIVQDGTLYNEQLRHRKEMEESMKRQEEELEKTKKEKEEACMISKNLMQLYEDEVRQRKEAEELVKRRREELEKVKKEKEEACSVGQNFMRLYEEEARRRKGTEEELSKVAAEKDAASSVCSEILLLLQSYTRRHGTPSGFSDEDSVTRQPPSYFICPISQEVMREPRVAADGFTYEAESLREWLDNGHETSPMTNLKLAHNNLVPNHALRSAIQEWLQRNS.

Residues 217 to 464 (QSESDRNDQL…KVAAEKDAAS (248 aa)) adopt a coiled-coil conformation. Residues 496–568 (QPPSYFICPI…AIQEWLQRNS (73 aa)) form the U-box domain.

It carries out the reaction S-ubiquitinyl-[E2 ubiquitin-conjugating enzyme]-L-cysteine + [acceptor protein]-L-lysine = [E2 ubiquitin-conjugating enzyme]-L-cysteine + N(6)-ubiquitinyl-[acceptor protein]-L-lysine.. It functions in the pathway protein modification; protein ubiquitination. Functionally, functions as an E3 ubiquitin ligase. In Arabidopsis thaliana (Mouse-ear cress), this protein is Putative U-box domain-containing protein 55 (PUB55).